A 131-amino-acid chain; its full sequence is MRKRVYYWTDSEHINKPVISDTILNTGVKINILKAKVEPQEAFLILELFGSKETIEKALNYLSKFGEVEEISKVIKRDLEKCVHCGCCITQCPINVIYMDEDYNVVFKEEDCVGCKNCLKACPFKAIEIFE.

4Fe-4S ferredoxin-type domains are found at residues Lys73–Asp102 and Tyr103–Glu131. [4Fe-4S] cluster contacts are provided by Cys82, Cys85, Cys88, Cys92, Cys112, Cys115, Cys118, and Cys122.

In terms of assembly, may form a complex with MJ0100. Requires [4Fe-4S] cluster as cofactor.

The protein operates within amino-acid biosynthesis. Functionally, required for O-acetylhomoserine sulfhydrylase (OAHS)-independent homocysteine (Hcy) biosynthesis. Together with MJ0100, catalyzes the condensation of sulfide with aspartate semialdehyde to generate homocysteine. May be involved in the reduction of the disulfide formed in MJ0100. The sequence is that of L-aspartate semialdehyde sulfurtransferase iron-sulfur subunit from Methanocaldococcus jannaschii (strain ATCC 43067 / DSM 2661 / JAL-1 / JCM 10045 / NBRC 100440) (Methanococcus jannaschii).